A 203-amino-acid polypeptide reads, in one-letter code: MNPEYDYLFKLLLIGDSGVGKSCLLLRFADDTYTESYISTIGVDFKIRTVELDGKVIKLQIWDTAGQERFRTITSSYYRGAHGIIVVYDVTDQESFNNVKQWLAEIDRYASENVNKLLVGNKSDLTGKKVVDYQAAKAFADEIGIPFLETSAKNATNVEQAFMTMAAEIKNRMASQPVPPKPGGPVVRPTEGKPINNKSSSCC.

Residues Gly-15–Cys-23, Tyr-33–Thr-40, Asp-63–Gln-67, Asn-121–Asp-124, and Ser-151–Lys-153 each bind GTP. An Effector region motif is present at residues Tyr-37 to Phe-45. The interval Met-173 to Cys-203 is disordered. S-geranylgeranyl cysteine attachment occurs at residues Cys-202 and Cys-203.

It belongs to the small GTPase superfamily. Rab family.

It localises to the cell membrane. Its function is as follows. Protein transport. Probably involved in vesicular traffic. The sequence is that of GTP-binding protein yptV1 (YPTV1) from Volvox carteri (Green alga).